We begin with the raw amino-acid sequence, 156 residues long: MSQELTINADQLTEEQIAEFKEAFSLFDKDGDGTITTKELGTVMRSLGQNPTEAELQDMINEVDADGNGTIDFPEFLTMMARKMKDTDSEEEIREAFRVFDKDGNGFISAAELRHVMTNLGEKLTDEEVDEMIREADIDGDGQVNYEEFVTMMTSK.

At Ser-2 the chain carries N-acetylserine. EF-hand domains lie at 15 to 50 (EQIA…LGQN), 51 to 86 (PTEA…KMKD), 88 to 123 (DSEE…LGEK), and 124 to 156 (LTDE…MTSK). 14 residues coordinate Ca(2+): Asp-28, Asp-30, Asp-32, Thr-34, Glu-39, Asp-64, Asp-66, Asn-68, Thr-70, Glu-75, Asp-101, Asp-103, Asn-105, and Glu-112. An N6,N6,N6-trimethyllysine modification is found at Lys-123. The Ca(2+) site is built by Asp-137, Asp-139, Asp-141, Gln-143, and Glu-148.

The protein belongs to the calmodulin family.

In terms of biological role, calmodulin mediates the control of a large number of enzymes, ion channels and other proteins by Ca(2+). Among the enzymes to be stimulated by the calmodulin-Ca(2+) complex are a number of protein kinases and phosphatases. The polypeptide is Calmodulin (Strongylocentrotus intermedius (Sea urchin)).